The sequence spans 288 residues: ATP synthase gamma chain (288 aa).

This sequence belongs to the ATPase gamma chain family. In terms of assembly, F-type ATPases have 2 components, CF(1) - the catalytic core - and CF(0) - the membrane proton channel. CF(1) has five subunits: alpha(3), beta(3), gamma(1), delta(1), epsilon(1). CF(0) has three main subunits: a, b and c.

The protein localises to the cell inner membrane. Functionally, produces ATP from ADP in the presence of a proton gradient across the membrane. The gamma chain is believed to be important in regulating ATPase activity and the flow of protons through the CF(0) complex. This Rickettsia akari (strain Hartford) protein is ATP synthase gamma chain.